Reading from the N-terminus, the 520-residue chain is D-aminopeptidase (520 aa).

Catalysis depends on Ser62, which acts as the Nucleophile. The Proton donor/acceptor role is filled by Lys65. Residues 477–487 are important for specificity; sequence QRSMDAPSPGE. Substrate is bound at residue Asp481.

It belongs to the peptidase S12 family. In terms of assembly, homodimer.

It catalyses the reaction Release of an N-terminal D-amino acid from a peptide, Xaa-|-Yaa-, in which Xaa is preferably D-Ala, D-Ser or D-Thr. D-amino acid amides and methyl esters also are hydrolyzed, as is glycine amide.. With respect to regulation, inhibited by beta-lactam compounds such as 6-aminopenicillic acid, 7-aminocephalosporanic acid, benzylpenicillin and ampicillin. Inhibited by p-chloromercuribenzoate. Hydrolyzes N-terminal residues in D-amino acid-containing peptides. The sequence is that of D-aminopeptidase from Brucella anthropi (strain ATCC 49188 / DSM 6882 / CCUG 24695 / JCM 21032 / LMG 3331 / NBRC 15819 / NCTC 12168 / Alc 37) (Ochrobactrum anthropi).